We begin with the raw amino-acid sequence, 133 residues long: Fatty acid-binding protein, heart (133 aa).

V2 is subject to N-acetylvaline. Position 8 is a phosphothreonine (T8). Residue Y20 is modified to Phosphotyrosine; by Tyr-kinases. S23 is modified (phosphoserine). T30 carries the phosphothreonine modification. A Phosphoserine modification is found at S83. 127-129 (RTY) lines the (9Z)-octadecenoate pocket. 127 to 129 (RTY) contributes to the hexadecanoate binding site. Position 127–129 (127–129 (RTY)) interacts with octadecanoate.

It belongs to the calycin superfamily. Fatty-acid binding protein (FABP) family.

It localises to the cytoplasm. FABPs are thought to play a role in the intracellular transport of long-chain fatty acids and their acyl-CoA esters. The chain is Fatty acid-binding protein, heart (FABP3) from Homo sapiens (Human).